A 257-amino-acid chain; its full sequence is Gamma-secretase subunit APH-1B (257 aa).

A run of 7 helical transmembrane segments spans residues 5-25 (VFFGCAFIAFGPALALYVFTI), 32-52 (IIFLIAGAFFWLVSLLISSLV), 70-90 (YLLIFGTFVSVYIQEMFRFAY), 115-135 (LLAYVSGLGFGIMSGVFSFVN), 158-178 (YSAFMTLVIILLHVFWGIVFF), 186-206 (WGILLIVLLTHLLVSAQTFIS), and 213-233 (LASAFIILVLMGTWAFLAAGG).

Belongs to the APH-1 family. Probable component of the gamma-secretase complex, a complex composed of a presenilin homodimer (PSEN1 or PSEN2), nicastrin (NCSTN), APH1 (APH1A or APH1B) and PEN2. Such minimal complex is sufficient for secretase activity, although other components may exist. Interacts with PSEN1 and PSEN2.

The protein localises to the membrane. Functionally, probable subunit of the gamma-secretase complex, an endoprotease complex that catalyzes the intramembrane cleavage of integral proteins such as Notch receptors and APP (amyloid-beta precursor protein). It probably represents a stabilizing cofactor for the presenilin homodimer that promotes the formation of a stable complex. Probably present in a minority of gamma-secretase complexes compared to APH1A. In Pongo abelii (Sumatran orangutan), this protein is Gamma-secretase subunit APH-1B (APH1B).